The following is a 567-amino-acid chain: Glucose-6-phosphate isomerase, cytosolic (567 aa).

The Proton donor role is filled by glutamate 360. Active-site residues include histidine 391 and lysine 516.

This sequence belongs to the GPI family. In terms of assembly, homodimer.

The protein resides in the cytoplasm. The catalysed reaction is alpha-D-glucose 6-phosphate = beta-D-fructose 6-phosphate. The protein operates within carbohydrate degradation; glycolysis; D-glyceraldehyde 3-phosphate and glycerone phosphate from D-glucose: step 2/4. This Zea mays (Maize) protein is Glucose-6-phosphate isomerase, cytosolic (PHI1).